We begin with the raw amino-acid sequence, 105 residues long: MANKIKKGDTVVVLSGKDKGKTGEVTQALPKDGKVVVAGVNVITRHRKPTQQNPQGGLERKEAPLFASKVALADPKTGKPTRVRFETRDGKKVRVAVKSGETING.

Belongs to the universal ribosomal protein uL24 family. As to quaternary structure, part of the 50S ribosomal subunit.

One of two assembly initiator proteins, it binds directly to the 5'-end of the 23S rRNA, where it nucleates assembly of the 50S subunit. Functionally, one of the proteins that surrounds the polypeptide exit tunnel on the outside of the subunit. The polypeptide is Large ribosomal subunit protein uL24 (Sphingopyxis alaskensis (strain DSM 13593 / LMG 18877 / RB2256) (Sphingomonas alaskensis)).